The chain runs to 1192 residues: DNA ligase 1 (1192 aa).

Disordered stretches follow at residues 29–257 and 280–517; these read ELNK…KEKE and EKEL…KSTQ. Residues 42-56 are compositionally biased toward basic and acidic residues; that stretch reads EAVVKEKVEKKEKKE. Acidic residues predominate over residues 70 to 113; that stretch reads EEEEEEQEEQDGEEEQEEEEEYQQQDEEIEEDINGEEEMELDEN. The segment covering 141-155 has biased composition (basic and acidic residues); sequence KTIENKETKKPEKQS. The span at 172 to 198 shows a compositional bias: acidic residues; that stretch reads DDEEDEEDENKTDDNDLDDMLDDDSDN. Basic and acidic residues-rich tracts occupy residues 199 to 257 and 280 to 368; these read EKDS…KEKE and EKEL…RANA. Composition is skewed to low complexity over residues 371–382 and 410–434; these read KSSVPTSTSKNS and STTT…ISSP. Positions 435-467 are enriched in basic and acidic residues; sequence SKKEEKEVITSKKQVEATKVEVKKEKEKEKEKE. Over residues 468–511 the composition is skewed to acidic residues; the sequence is KEDDEEEEEEEEDDDEKLEDIDEEEYEEEEEEDEEGISENEEEE. Residues 724–733 form an interaction with target DNA region; that stretch reads KLRIGLAERS. Position 842 (glutamate 842) interacts with ATP. The active-site N6-AMP-lysine intermediate is lysine 844. ATP-binding residues include arginine 849 and arginine 865. Glutamate 897 lines the Mg(2+) pocket. An interaction with target DNA region spans residues 918 to 920; sequence ARK. Glutamate 996 contacts Mg(2+). Positions 1001, 1014, and 1020 each coordinate ATP. Residues 1157-1192 form a disordered region; it reads DKSPEDATSSDQVVDMYQNQKINSQSSKINEKDEDY. Residues 1162–1184 show a composition bias toward polar residues; it reads DATSSDQVVDMYQNQKINSQSSK.

The protein belongs to the ATP-dependent DNA ligase family. Requires Mg(2+) as cofactor.

The protein localises to the nucleus. It catalyses the reaction ATP + (deoxyribonucleotide)n-3'-hydroxyl + 5'-phospho-(deoxyribonucleotide)m = (deoxyribonucleotide)n+m + AMP + diphosphate.. In terms of biological role, DNA ligase that seals nicks in double-stranded DNA during DNA replication, DNA recombination and DNA repair. The sequence is that of DNA ligase 1 (lig1) from Dictyostelium discoideum (Social amoeba).